Here is a 503-residue protein sequence, read N- to C-terminus: Putative cytochrome P450 71A28 (503 aa).

The chain crosses the membrane as a helical span at residues 1–21; that stretch reads MILISLCFTTFLAFLFLNPLL. Cysteine 443 is a binding site for heme.

It belongs to the cytochrome P450 family. It depends on heme as a cofactor.

It is found in the membrane. This Arabidopsis thaliana (Mouse-ear cress) protein is Putative cytochrome P450 71A28 (CYP71A28).